The chain runs to 340 residues: Lipopolysaccharide heptosyltransferase 3 (340 aa).

The protein belongs to the glycosyltransferase 9 family.

The enzyme catalyses an L-alpha-D-Hep-(1-&gt;3)-4-O-phospho-L-alpha-D-Hep-(1-&gt;5)-[alpha-Kdo-(2-&gt;4)]-alpha-Kdo-(2-&gt;6)-lipid A + ADP-L-glycero-beta-D-manno-heptose = an L-alpha-D-Hep-(1-&gt;7)-L-alpha-D-Hep-(1-&gt;3)-4-O-phospho-L-alpha-D-Hep-(1-&gt;5)-[alpha-Kdo-(2-&gt;4)]-alpha-Kdo-(2-&gt;6)-lipid A + ADP + H(+). It carries out the reaction L-alpha-D-Hep-(1-&gt;3)-4-O-phospho-L-alpha-D-Hep-(1-&gt;5)-[alpha-Kdo-(2-&gt;4)]-alpha-Kdo-(2-&gt;6)-lipid A (E. coli) + ADP-L-glycero-beta-D-manno-heptose = L-alpha-D-Hep-(1-&gt;7)-L-alpha-D-Hep-(1-&gt;3)-4-O-phospho-L-alpha-D-Hep-(1-&gt;5)-[alpha-Kdo-(2-&gt;4)]-alpha-Kdo-(2-&gt;6)-lipid A (E. coli) + ADP + H(+). The protein operates within bacterial outer membrane biogenesis; LPS core biosynthesis. In terms of biological role, glycosyltransferase involved in the biosynthesis of the core oligosaccharide region of lipopolysaccharide (LPS). Catalyzes the addition of the third heptose unit (HepIII) to the second heptose unit (HepII) of the phospho-Hep2-Kdo2-lipid A module. The transfer of HepIII seems to be a prerequisite to the phosphorylation of the second heptose unit. In Escherichia coli, this protein is Lipopolysaccharide heptosyltransferase 3.